The sequence spans 355 residues: Peptide chain release factor 1 (355 aa).

N5-methylglutamine is present on glutamine 233. A compositionally biased stretch (basic and acidic residues) spans 281–293 (RRNKEQERADSRR). Residues 281-308 (RRNKEQERADSRRGQIGSGDRSERIRTY) form a disordered region.

This sequence belongs to the prokaryotic/mitochondrial release factor family. Methylated by PrmC. Methylation increases the termination efficiency of RF1.

It localises to the cytoplasm. Its function is as follows. Peptide chain release factor 1 directs the termination of translation in response to the peptide chain termination codons UAG and UAA. This is Peptide chain release factor 1 from Rickettsia akari (strain Hartford).